Consider the following 152-residue polypeptide: Protein Smg homolog (152 aa).

This sequence belongs to the Smg family.

This chain is Protein Smg homolog, found in Bordetella avium (strain 197N).